Reading from the N-terminus, the 128-residue chain is Large ribosomal subunit protein bL17 (128 aa).

It belongs to the bacterial ribosomal protein bL17 family. Part of the 50S ribosomal subunit. Contacts protein L32.

In Tolumonas auensis (strain DSM 9187 / NBRC 110442 / TA 4), this protein is Large ribosomal subunit protein bL17.